The primary structure comprises 417 residues: Gamma-glutamyl phosphate reductase (417 aa).

Belongs to the gamma-glutamyl phosphate reductase family.

The protein localises to the cytoplasm. The enzyme catalyses L-glutamate 5-semialdehyde + phosphate + NADP(+) = L-glutamyl 5-phosphate + NADPH + H(+). Its pathway is amino-acid biosynthesis; L-proline biosynthesis; L-glutamate 5-semialdehyde from L-glutamate: step 2/2. Functionally, catalyzes the NADPH-dependent reduction of L-glutamate 5-phosphate into L-glutamate 5-semialdehyde and phosphate. The product spontaneously undergoes cyclization to form 1-pyrroline-5-carboxylate. The chain is Gamma-glutamyl phosphate reductase from Sodalis glossinidius (strain morsitans).